A 118-amino-acid chain; its full sequence is UPF0295 protein BT9727_0449 (118 aa).

The next 2 membrane-spanning stretches (helical) occupy residues 12-32 (IRTFALSLVFIGLFIAYLGVF) and 43-63 (FMMVGFLAVIASTVVYFWIGM).

Belongs to the UPF0295 family.

The protein localises to the cell membrane. The polypeptide is UPF0295 protein BT9727_0449 (Bacillus thuringiensis subsp. konkukian (strain 97-27)).